The chain runs to 459 residues: 4,4'-diaponeurosporen-aldehyde dehydrogenase (459 aa).

NAD(+) contacts are provided by residues 114–115 (FN) and 188–189 (GS). The active-site Proton acceptor is Glu210. An NAD(+)-binding site is contributed by Met211. The active-site Nucleophile is Cys244. Position 336 (Glu336) interacts with NAD(+).

This sequence belongs to the aldehyde dehydrogenase family.

It catalyses the reaction 4,4'-diaponeurosporenal + NAD(+) + H2O = 4,4'-diaponeurosporenoate + NADH + 2 H(+). The protein operates within carotenoid biosynthesis; staphyloxanthin biosynthesis; staphyloxanthin from farnesyl diphosphate. Its function is as follows. Involved in the biosynthesis of the yellow-orange carotenoid staphyloxanthin, which plays a role in the virulence via its protective function against oxidative stress. Catalyzes the oxidation of 4,4'-diaponeurosporen-4-al to yield 4,4'-diaponeurosporenoic acid. The polypeptide is 4,4'-diaponeurosporen-aldehyde dehydrogenase (Staphylococcus aureus (strain NCTC 8325 / PS 47)).